The chain runs to 165 residues: Protein-export protein SecB (165 aa).

The protein belongs to the SecB family. Homotetramer, a dimer of dimers. One homotetramer interacts with 1 SecA dimer.

Its subcellular location is the cytoplasm. Its function is as follows. One of the proteins required for the normal export of preproteins out of the cell cytoplasm. It is a molecular chaperone that binds to a subset of precursor proteins, maintaining them in a translocation-competent state. It also specifically binds to its receptor SecA. The polypeptide is Protein-export protein SecB (Colwellia psychrerythraea (strain 34H / ATCC BAA-681) (Vibrio psychroerythus)).